The primary structure comprises 281 residues: 2-C-methyl-D-erythritol 4-phosphate cytidylyltransferase (281 aa).

The protein belongs to the IspD/TarI cytidylyltransferase family. IspD subfamily.

The catalysed reaction is 2-C-methyl-D-erythritol 4-phosphate + CTP + H(+) = 4-CDP-2-C-methyl-D-erythritol + diphosphate. It participates in isoprenoid biosynthesis; isopentenyl diphosphate biosynthesis via DXP pathway; isopentenyl diphosphate from 1-deoxy-D-xylulose 5-phosphate: step 2/6. Catalyzes the formation of 4-diphosphocytidyl-2-C-methyl-D-erythritol from CTP and 2-C-methyl-D-erythritol 4-phosphate (MEP). The polypeptide is 2-C-methyl-D-erythritol 4-phosphate cytidylyltransferase (Psychrobacter arcticus (strain DSM 17307 / VKM B-2377 / 273-4)).